Here is a 452-residue protein sequence, read N- to C-terminus: Retrograde protein of 51 kDa (452 aa).

A compositionally biased stretch (basic and acidic residues) spans 1–13 (MQKGAKIEDEGRQ). The segment at 1-50 (MQKGAKIEDEGRQSRIQSRNFIIQRSDPRTRGSSVYSSRSSSYNVRSSIS) is disordered. Positions 1 to 75 (MQKGAKIEDE…KGNREKEKRE (75 aa)) are head. Positions 14–23 (SRIQSRNFII) are enriched in polar residues. Residues 33–50 (SSVYSSRSSSYNVRSSIS) are compositionally biased toward low complexity. Residues 72–424 (EKREMQNLNE…KLLEGEESRV (353 aa)) form the IF rod domain. Positions 76–111 (MQNLNERLASYIEKVHFLDAQVKKLEAENEALRNRK) are coil 1A. Residues 112–121 (VEDLQPIRDA) form a linker 1 region. The segment at 122 to 259 (YENELRQARK…DLLDQLELLK (138 aa)) is coil 1B. Ser156 bears the Sulfoserine mark. Residues 260 to 278 (PEPIQIKGMDYADFWKSEL) form a linker 12 region. A coil 2 region spans residues 279-424 (AKCVREINLA…KLLEGEESRV (146 aa)). Positions 425–452 (GLRTLVEQAIGTQSKGSASLKDAIQSSS) are tail.

It belongs to the intermediate filament family.

This chain is Retrograde protein of 51 kDa (RGP51), found in Lymnaea stagnalis (Great pond snail).